The sequence spans 637 residues: Probable potassium transport system protein Kup (637 aa).

12 helical membrane passes run 24-44 (LAIA…LYAL), 64-84 (VISL…LLFV), 113-133 (AGAL…DAVI), 151-171 (PHLS…LFWI), 182-202 (LFGP…VYHI), 225-245 (LLQA…AEAL), 261-281 (AYGL…ALLI), 290-310 (PFFL…STVA), 351-371 (IYVP…VIGF), 381-401 (YGIA…VVMV), 409-429 (LLVG…FGAN), and 433-453 (VAQG…LLMT).

It belongs to the HAK/KUP transporter (TC 2.A.72) family.

The protein resides in the cell inner membrane. The enzyme catalyses K(+)(in) + H(+)(in) = K(+)(out) + H(+)(out). Its function is as follows. Transport of potassium into the cell. Likely operates as a K(+):H(+) symporter. The protein is Probable potassium transport system protein Kup of Burkholderia ambifaria (strain MC40-6).